A 699-amino-acid polypeptide reads, in one-letter code: Ubiquitin-like modifier-activating enzyme ATG7 (699 aa).

The GXGXXG motif signature appears at Gly-370–Gly-375. Residue Cys-550 is the Glycyl thioester intermediate of the active site. The interval Ala-653–Glu-691 is homodimerization.

This sequence belongs to the ATG7 family. Homodimer. Interacts with ATG8 through a thioester bond between Cys-550 and the C-terminal Gly of ATG8 and with ATG12 through a thioester bond between Cys-550 and the C-terminal Gly of ATG12. Also interacts with ATG3.

It is found in the cytoplasm. Its subcellular location is the preautophagosomal structure. In terms of biological role, E1-like activating enzyme involved in the 2 ubiquitin-like systems required for cytoplasm to vacuole transport (Cvt) and autophagy. Activates ATG12 for its conjugation with ATG5 and ATG8 for its conjugation with phosphatidylethanolamine. Both systems are needed for the ATG8 association to Cvt vesicles and autophagosomes membranes. Autophagy is essential for maintenance of amino acid levels and protein synthesis under nitrogen starvation. Required for selective autophagic degradation of the nucleus (nucleophagy) as well as for mitophagy which contributes to regulate mitochondrial quantity and quality by eliminating the mitochondria to a basal level to fulfill cellular energy requirements and preventing excess ROS production. Required for normal mycelial growth and conidiogenesis. In Sordaria macrospora (strain ATCC MYA-333 / DSM 997 / K(L3346) / K-hell), this protein is Ubiquitin-like modifier-activating enzyme ATG7.